A 322-amino-acid polypeptide reads, in one-letter code: Nuclease 1, mitochondrial (322 aa).

His-142 (proton acceptor) is an active-site residue. Asn-174 contributes to the Mg(2+) binding site.

It belongs to the DNA/RNA non-specific endonuclease family. Homodimer. Mn(2+) serves as cofactor. The cofactor is Mg(2+).

It is found in the mitochondrion inner membrane. Functionally, this enzyme has both RNase and DNase activity. It degrades single-stranded DNA and RNA. This chain is Nuclease 1, mitochondrial (pnu1), found in Schizosaccharomyces pombe (strain 972 / ATCC 24843) (Fission yeast).